The following is a 1170-amino-acid chain: DNA-directed RNA polymerase subunit beta' (1170 aa).

Residues Cys60, Cys62, Cys75, and Cys78 each contribute to the Zn(2+) site. Mg(2+) is bound by residues Asp449, Asp451, and Asp453. Positions 774, 848, 855, and 858 each coordinate Zn(2+). The tract at residues 1145–1170 is disordered; that stretch reads EPGEENGEPGGERLYGMDELYGETAN.

This sequence belongs to the RNA polymerase beta' chain family. The RNAP catalytic core consists of 2 alpha, 1 beta, 1 beta' and 1 omega subunit. When a sigma factor is associated with the core the holoenzyme is formed, which can initiate transcription. Mg(2+) serves as cofactor. Zn(2+) is required as a cofactor.

It catalyses the reaction RNA(n) + a ribonucleoside 5'-triphosphate = RNA(n+1) + diphosphate. DNA-dependent RNA polymerase catalyzes the transcription of DNA into RNA using the four ribonucleoside triphosphates as substrates. The sequence is that of DNA-directed RNA polymerase subunit beta' from Pelotomaculum thermopropionicum (strain DSM 13744 / JCM 10971 / SI).